A 301-amino-acid polypeptide reads, in one-letter code: Thiosulfate sulfurtransferase (301 aa).

2 consecutive Rhodanese domains span residues 31-138 and 171-289; these read GSPG…DTSY and QSGG…MPIE. Cys248 acts as the Cysteine persulfide intermediate in catalysis. Substrate is bound at residue Arg253.

The enzyme catalyses thiosulfate + hydrogen cyanide = thiocyanate + sulfite + 2 H(+). This chain is Thiosulfate sulfurtransferase (thtR), found in Corynebacterium glutamicum (strain ATCC 13032 / DSM 20300 / JCM 1318 / BCRC 11384 / CCUG 27702 / LMG 3730 / NBRC 12168 / NCIMB 10025 / NRRL B-2784 / 534).